The following is a 146-amino-acid chain: Small ribosomal subunit protein bS6 (146 aa).

The disordered stretch occupies residues 106-146 (QAAATQRAAERRAQREAERNAAQAQSSASNQARTAATTSGK). Residues 113-124 (AAERRAQREAER) show a composition bias toward basic and acidic residues. Over residues 125-146 (NAAQAQSSASNQARTAATTSGK) the composition is skewed to low complexity.

This sequence belongs to the bacterial ribosomal protein bS6 family.

Its function is as follows. Binds together with bS18 to 16S ribosomal RNA. The polypeptide is Small ribosomal subunit protein bS6 (Oenococcus oeni (strain ATCC BAA-331 / PSU-1)).